Here is a 204-residue protein sequence, read N- to C-terminus: Large ribosomal subunit protein uL4 (204 aa).

The tract at residues 49–75 is disordered; it reads TKGRSDVSGGGKKPWRQKGRGGARAGS.

Belongs to the universal ribosomal protein uL4 family. In terms of assembly, part of the 50S ribosomal subunit.

Its function is as follows. One of the primary rRNA binding proteins, this protein initially binds near the 5'-end of the 23S rRNA. It is important during the early stages of 50S assembly. It makes multiple contacts with different domains of the 23S rRNA in the assembled 50S subunit and ribosome. Forms part of the polypeptide exit tunnel. The protein is Large ribosomal subunit protein uL4 of Campylobacter jejuni (strain RM1221).